The chain runs to 161 residues: Protein-export protein SecB (161 aa).

It belongs to the SecB family. Homotetramer, a dimer of dimers. One homotetramer interacts with 1 SecA dimer.

The protein resides in the cytoplasm. In terms of biological role, one of the proteins required for the normal export of preproteins out of the cell cytoplasm. It is a molecular chaperone that binds to a subset of precursor proteins, maintaining them in a translocation-competent state. It also specifically binds to its receptor SecA. The chain is Protein-export protein SecB from Pseudomonas fluorescens (strain Pf0-1).